We begin with the raw amino-acid sequence, 205 residues long: uncharacterized protein (205 aa).

A signal peptide spans 1–18; it reads MKASLALLSLLTAFTSHS.

This is an uncharacterized protein from Escherichia coli (strain K12).